The sequence spans 534 residues: Cytochrome P450 714B1 (534 aa).

Met1 is a topological domain (lumenal). The chain crosses the membrane as a helical; Signal-anchor for type III membrane protein span at residues 2 to 22 (VVVVAAAMAAASLCCGVAAYL). At 23–534 (YYVLWLAPER…RSKCDWAGFD (512 aa)) the chain is on the cytoplasmic side. Cys472 is a binding site for heme.

Belongs to the cytochrome P450 family. Heme is required as a cofactor. In terms of tissue distribution, highly expressed in spikelet and uppermost internode. Detected in shoots, roots, leaves and anthers.

It localises to the membrane. Catalyzes the 13-hydroxylation of gibberellins (GAs). Determines the ratio of GA4 and GA1. Converts GA12 into GA53. The sequence is that of Cytochrome P450 714B1 (CYP714B1) from Oryza sativa subsp. japonica (Rice).